The sequence spans 407 residues: 1-deoxy-D-xylulose 5-phosphate reductoisomerase (407 aa).

Thr25, Gly26, Ser27, Ile28, Asn53, and Asn136 together coordinate NADPH. Lys137 is a 1-deoxy-D-xylulose 5-phosphate binding site. Residue Glu138 participates in NADPH binding. Position 162 (Asp162) interacts with Mn(2+). Positions 163, 164, 188, and 211 each coordinate 1-deoxy-D-xylulose 5-phosphate. Mn(2+) is bound at residue Glu164. Gly217 contributes to the NADPH binding site. Residues Ser224, Asn229, Lys230, and Glu233 each contribute to the 1-deoxy-D-xylulose 5-phosphate site. Glu233 is a binding site for Mn(2+).

This sequence belongs to the DXR family. The cofactor is Mg(2+). Mn(2+) is required as a cofactor.

The catalysed reaction is 2-C-methyl-D-erythritol 4-phosphate + NADP(+) = 1-deoxy-D-xylulose 5-phosphate + NADPH + H(+). It participates in isoprenoid biosynthesis; isopentenyl diphosphate biosynthesis via DXP pathway; isopentenyl diphosphate from 1-deoxy-D-xylulose 5-phosphate: step 1/6. Catalyzes the NADPH-dependent rearrangement and reduction of 1-deoxy-D-xylulose-5-phosphate (DXP) to 2-C-methyl-D-erythritol 4-phosphate (MEP). The protein is 1-deoxy-D-xylulose 5-phosphate reductoisomerase of Bradyrhizobium sp. (strain BTAi1 / ATCC BAA-1182).